A 253-amino-acid chain; its full sequence is Triosephosphate isomerase (253 aa).

9-11 is a binding site for substrate; it reads NWK. The active-site Electrophile is His-98. The active-site Proton acceptor is Glu-170. Substrate contacts are provided by residues Gly-176, Ser-216, and 237 to 238; that span reads GG.

The protein belongs to the triosephosphate isomerase family. Homodimer.

The protein resides in the cytoplasm. The catalysed reaction is D-glyceraldehyde 3-phosphate = dihydroxyacetone phosphate. It participates in carbohydrate biosynthesis; gluconeogenesis. It functions in the pathway carbohydrate degradation; glycolysis; D-glyceraldehyde 3-phosphate from glycerone phosphate: step 1/1. Functionally, involved in the gluconeogenesis. Catalyzes stereospecifically the conversion of dihydroxyacetone phosphate (DHAP) to D-glyceraldehyde-3-phosphate (G3P). In Amoebophilus asiaticus (strain 5a2), this protein is Triosephosphate isomerase.